We begin with the raw amino-acid sequence, 279 residues long: Tryptophan synthase alpha chain (279 aa).

Catalysis depends on proton acceptor residues glutamate 50 and aspartate 61.

This sequence belongs to the TrpA family. Tetramer of two alpha and two beta chains.

The enzyme catalyses (1S,2R)-1-C-(indol-3-yl)glycerol 3-phosphate + L-serine = D-glyceraldehyde 3-phosphate + L-tryptophan + H2O. It participates in amino-acid biosynthesis; L-tryptophan biosynthesis; L-tryptophan from chorismate: step 5/5. The alpha subunit is responsible for the aldol cleavage of indoleglycerol phosphate to indole and glyceraldehyde 3-phosphate. This is Tryptophan synthase alpha chain from Methylobacterium radiotolerans (strain ATCC 27329 / DSM 1819 / JCM 2831 / NBRC 15690 / NCIMB 10815 / 0-1).